The sequence spans 84 residues: Metallothionein-like protein 4A (84 aa).

A disordered region spans residues 1–26 (MADTGKGSSVAGCNDSCGCPSPCPGG).

This sequence belongs to the metallothionein superfamily. Type 15 family. Expressed specifically in seeds.

The protein localises to the cytoplasm. Its subcellular location is the nucleus. It localises to the cell membrane. Functionally, metallothioneins have a high content of cysteine residues that bind various heavy metals. Functions as a metal chelator of copper (Cu) and zinc (Zn). Plays a role in storing and distributing Zn ion in seed. The chain is Metallothionein-like protein 4A (MT4A) from Arabidopsis thaliana (Mouse-ear cress).